The sequence spans 286 residues: 2-hydroxy-6-oxo-6-phenylhexa-2,4-dienoate hydrolase (286 aa).

Substrate contacts are provided by residues 42–43, asparagine 51, asparagine 111, serine 180, and arginine 190; that span reads GG. The active-site Proton acceptor is histidine 265. Tryptophan 266 lines the substrate pocket.

It belongs to the AB hydrolase superfamily. BphD family. Homodimer.

The enzyme catalyses 2,6-dioxo-6-phenylhexa-3-enoate + H2O = 2-oxopent-4-enoate + benzoate + H(+). It participates in xenobiotic degradation; biphenyl degradation; 2-hydroxy-2,4-pentadienoate and benzoate from biphenyl: step 4/4. With respect to regulation, inhibited by 3-Cl HOPDA. Functionally, catalyzes an unusual C-C bond hydrolysis of 2-hydroxy-6-oxo-6-phenylhexa-2,4-dienoic acid (HOPDA) to produce benzoic acid and 2-hydroxy-2,4-pentadienoic acid (HPD). The chain is 2-hydroxy-6-oxo-6-phenylhexa-2,4-dienoate hydrolase (bphD) from Paraburkholderia xenovorans (strain LB400).